The following is a 357-amino-acid chain: Glutamine synthetase root isozyme 1 (357 aa).

A GS beta-grasp domain is found at 19–99; it reads IIAEYIWIGG…VMCDCYTPQG (81 aa). Positions 106–357 constitute a GS catalytic domain; that stretch reads KRYSAAKVFS…AETTILWNGN (252 aa).

This sequence belongs to the glutamine synthetase family. In terms of assembly, homooctamer. In terms of tissue distribution, found mainly in the cortical tissues of seedling roots, and in the root tip.

The protein localises to the cytoplasm. The enzyme catalyses L-glutamate + NH4(+) + ATP = L-glutamine + ADP + phosphate + H(+). Functionally, plays a role in the flow of nitrogen into nitrogenous organic compounds. This chain is Glutamine synthetase root isozyme 1 (GLN6), found in Zea mays (Maize).